Here is a 616-residue protein sequence, read N- to C-terminus: Proline--tRNA ligase (616 aa).

Belongs to the class-II aminoacyl-tRNA synthetase family. ProS type 1 subfamily. In terms of assembly, homodimer.

The protein resides in the cytoplasm. The enzyme catalyses tRNA(Pro) + L-proline + ATP = L-prolyl-tRNA(Pro) + AMP + diphosphate. Its function is as follows. Catalyzes the attachment of proline to tRNA(Pro) in a two-step reaction: proline is first activated by ATP to form Pro-AMP and then transferred to the acceptor end of tRNA(Pro). As ProRS can inadvertently accommodate and process non-cognate amino acids such as alanine and cysteine, to avoid such errors it has two additional distinct editing activities against alanine. One activity is designated as 'pretransfer' editing and involves the tRNA(Pro)-independent hydrolysis of activated Ala-AMP. The other activity is designated 'posttransfer' editing and involves deacylation of mischarged Ala-tRNA(Pro). The misacylated Cys-tRNA(Pro) is not edited by ProRS. The protein is Proline--tRNA ligase of Streptococcus mutans serotype c (strain ATCC 700610 / UA159).